We begin with the raw amino-acid sequence, 802 residues long: Osmosensitive cation channel TMEM63C (802 aa).

The Extracellular portion of the chain corresponds to 1–35 (MSAFPDSMDQKFHNMTVNECFQSRSTVLQGQPFGG). A helical membrane pass occupies residues 36 to 60 (IPTVLVLNIILWVFVVLLYSFLRKA). The Cytoplasmic segment spans residues 61–124 (AWDYGRLALL…RDRDLINKCG (64 aa)). Residues Ser-75 and Ser-78 each carry the phosphoserine modification. Residues 125-157 (DDARIYITFQYHLIIFVLILCIPSLGIILPVNY) traverse the membrane as a helical segment. The Extracellular portion of the chain corresponds to 158 to 180 (IGTVLDWNSHFGRTTIVNVSTES). Residues 181 to 205 (KFLWLHSLFAFLYFLINLAFMGHHC) traverse the membrane as a helical segment. The Cytoplasmic portion of the chain corresponds to 206–401 (LGFVPKKSLH…IIWKHLSIRR (196 aa)). The chain crosses the membrane as a helical span at residues 402 to 431 (FSWWTRFIAINTFLFFLFFFLTTPAIIINT). The Extracellular portion of the chain corresponds to 432–446 (IDIYNVTRPIEKLQS). The helical transmembrane segment at 447–476 (PIVTQFFPSVLLWAFTVTMPLLVYLSAFLE) threads the bilayer. At 477–480 (AHWT) the chain is on the cytoplasmic side. Residues 481–517 (RSSQNLIIVHKCYIFLVFMVVILPSMGLTSLHVFLRW) form a helical membrane-spanning segment. Residues 518–540 (LFDIYYLEHATIRFQCVFLPDNG) lie on the Extracellular side of the membrane. Residues 541 to 573 (AFFINYVITAALLGTGMELMRLGSLCTYCTRLF) traverse the membrane as a helical segment. Over 574–593 (LSKSEPERVHIRKNQATDFQ) the chain is Cytoplasmic. The helical transmembrane segment at 594–612 (FGREYAWMLNVFSVVMAYS) threads the bilayer. Over 613 to 615 (ITC) the chain is Extracellular. Residues 616–640 (PIIVPFGLLYLCMKHITDRYNMYYS) form a helical membrane-spanning segment. At 641–647 (YAPTKLN) the chain is on the cytoplasmic side. A helical transmembrane segment spans residues 648–676 (AQIHMAAVYQAIFAPLLGLFWMLFFSILR). The Extracellular segment spans residues 677–681 (VGSLH). A helical transmembrane segment spans residues 682 to 702 (SITLFSMSSLIISVVIAFSGV). Residues 703-802 (FLGKLRIAQR…EGLEMEGQSH (100 aa)) lie on the Cytoplasmic side of the membrane. Residues 753-785 (TPASSPARHTYGTINSQPEEGEEESGLRGFARE) form a disordered region.

Belongs to the CSC1 (TC 1.A.17) family. In terms of assembly, monomer.

It is found in the endoplasmic reticulum membrane. It localises to the cell membrane. The catalysed reaction is Ca(2+)(in) = Ca(2+)(out). Functionally, acts as an osmosensitive cation channel preferentially activated upon hypotonic stress. In contrast to TMEM63B, does not show phospholipid scramblase activity. Enriched in mitochondria-ER contact sites where it may regulate the metabolite flux and organelles' morphologies in response to osmotic changes. In particular may regulate mitochondrial motility and function in motor neuron axons. Required for the functional integrity of the kidney glomerular filtration barrier. This Mus musculus (Mouse) protein is Osmosensitive cation channel TMEM63C.